The following is a 352-amino-acid chain: S-norcoclaurine synthase 1 (352 aa).

Residues 200–304 (KPLRTVFNRE…RLSIAAFHDP (105 aa)) enclose the Fe2OG dioxygenase domain. The Fe cation site is built by His-228, Asp-230, and His-285.

It belongs to the iron/ascorbate-dependent oxidoreductase family. In terms of assembly, monomer. Requires Fe cation as cofactor.

The catalysed reaction is (4-hydroxyphenyl)acetaldehyde + dopamine = (S)-norcoclaurine + H2O. Inhibited by O-phenanthroline, but not by EDTA. Functionally, involved in the biosynthesis of the common precursor of all benzylisoquinoline alkaloids such as morphine, sanguinarine, codeine or berberine. Condenses dopamine and phenylacetaldehyde, 3,4-dihydrophenylacetaldehyde or 4-hydroxyphenylacetaldehyde. This Coptis japonica (Japanese goldthread) protein is S-norcoclaurine synthase 1 (NCS1).